The following is a 234-amino-acid chain: Ponticulin-like protein J (234 aa).

The first 20 residues, 1 to 20 (MRLLNNLILMVVLFVAVSNA), serve as a signal peptide directing secretion. N-linked (GlcNAc...) asparagine glycosylation is found at N19, N143, N166, and N206. A disordered region spans residues 115–213 (TIKCGTLPPD…SDNETAEGNN (99 aa)). The span at 154 to 195 (KSTPKSPSTPKTNNSNEDSDLTTSSSDSSSSTKSSPKSKSST) shows a compositional bias: low complexity. A lipid anchor (GPI-like-anchor amidated asparagine) is attached at N212. Residue N213 is glycosylated (N-linked (GlcNAc...) asparagine). A propeptide spans 213–234 (NASSNIATFSLVIISLLVASLF) (removed in mature form).

The protein belongs to the ponticulin family. The GPI-like-anchor contains a phosphoceramide group, rather than a phosphatidyl group.

The protein localises to the cell membrane. Functionally, binds F-actin and nucleates actin assembly. In Dictyostelium discoideum (Social amoeba), this protein is Ponticulin-like protein J (ponJ).